The chain runs to 1892 residues: Kinesin-like protein KIN-12E (1892 aa).

The segment at 1–28 (MAGHGAGGRRASTSRAAARRVEAETNEN) is disordered. Residues 64-401 (NVQVLIRIRP…LKFAQRAKLI (338 aa)) form the Kinesin motor domain. Position 145-152 (145-152 (GQTGSGKT)) interacts with ATP. Coiled coils occupy residues 406–438 (KVNEDASGDVMSLQRQIEDLKDQLTCLKKQQNM), 486–526 (SLRR…TTVK), 1066–1139 (LFSN…LHEQ), 1303–1357 (KLLQ…LAEN), and 1396–1528 (ISET…SYQI). The span at 1633-1649 (LHESNSDTGHTKFEKPS) shows a compositional bias: basic and acidic residues. A disordered region spans residues 1633–1656 (LHESNSDTGHTKFEKPSGRTRGSG). Positions 1780-1841 (MDQRKADLLE…LVGSNQAIAE (62 aa)) form a coiled coil. The disordered stretch occupies residues 1870–1892 (HARHEHSRLQAAKSSRTRRGSHQ).

The protein belongs to the TRAFAC class myosin-kinesin ATPase superfamily. Kinesin family. KIN-12 subfamily.

This Oryza sativa subsp. japonica (Rice) protein is Kinesin-like protein KIN-12E.